Reading from the N-terminus, the 224-residue chain is Adenosylcobinamide-GDP ribazoletransferase (224 aa).

The next 4 membrane-spanning stretches (helical) occupy residues 21–41 (LSFK…AAIP), 44–64 (LLYL…ATGL), 97–117 (GGIF…HSPL), and 156–176 (WPAA…TTAV).

The protein belongs to the CobS family. Mg(2+) serves as cofactor.

The protein resides in the cell membrane. The catalysed reaction is alpha-ribazole + adenosylcob(III)inamide-GDP = adenosylcob(III)alamin + GMP + H(+). It carries out the reaction alpha-ribazole 5'-phosphate + adenosylcob(III)inamide-GDP = adenosylcob(III)alamin 5'-phosphate + GMP + H(+). The protein operates within cofactor biosynthesis; adenosylcobalamin biosynthesis; adenosylcobalamin from cob(II)yrinate a,c-diamide: step 7/7. In terms of biological role, joins adenosylcobinamide-GDP and alpha-ribazole to generate adenosylcobalamin (Ado-cobalamin). Also synthesizes adenosylcobalamin 5'-phosphate from adenosylcobinamide-GDP and alpha-ribazole 5'-phosphate. The chain is Adenosylcobinamide-GDP ribazoletransferase from Pyrobaculum aerophilum (strain ATCC 51768 / DSM 7523 / JCM 9630 / CIP 104966 / NBRC 100827 / IM2).